Here is a 226-residue protein sequence, read N- to C-terminus: HTH-type transcriptional regulator Rv0324 (226 aa).

The 95-residue stretch at 7–101 folds into the HTH arsR-type domain; the sequence is RKAALLDQVA…LVQVVADEHL (95 aa). The segment at residues 41 to 64 is a DNA-binding region (H-T-H motif); the sequence is VEAIATATGMNLTTASANLQALKS. The Rhodanese domain maps to 129–218; that stretch reads EAGEVTLVDV…WRLAGLPVDE (90 aa). Cysteine 177 serves as the catalytic Cysteine persulfide intermediate.

Part of a regulatory network that coordinates tolerance to the antitubercular drug bedaquiline. This is HTH-type transcriptional regulator Rv0324 from Mycobacterium tuberculosis (strain ATCC 25618 / H37Rv).